We begin with the raw amino-acid sequence, 95 residues long: Large ribosomal subunit protein bL25 (95 aa).

Belongs to the bacterial ribosomal protein bL25 family. Part of the 50S ribosomal subunit; part of the 5S rRNA/L5/L18/L25 subcomplex. Contacts the 5S rRNA. Binds to the 5S rRNA independently of L5 and L18.

This is one of the proteins that binds to the 5S RNA in the ribosome where it forms part of the central protuberance. This chain is Large ribosomal subunit protein bL25, found in Shewanella woodyi (strain ATCC 51908 / MS32).